A 290-amino-acid polypeptide reads, in one-letter code: Elongation factor Ts (290 aa).

Residues 81 to 84 (TDFV) form an involved in Mg(2+) ion dislocation from EF-Tu region.

It belongs to the EF-Ts family.

The protein resides in the cytoplasm. In terms of biological role, associates with the EF-Tu.GDP complex and induces the exchange of GDP to GTP. It remains bound to the aminoacyl-tRNA.EF-Tu.GTP complex up to the GTP hydrolysis stage on the ribosome. The chain is Elongation factor Ts from Saccharophagus degradans (strain 2-40 / ATCC 43961 / DSM 17024).